Consider the following 302-residue polypeptide: Protein KTI12 homolog (302 aa).

An ATP-binding site is contributed by 8 to 15 (GQPCSGKS). The interval 260–273 (LRRTFVKLMGQSSL) is calmodulin-binding.

It belongs to the KTI12 family. Interacts with the elongator complex. Binds to calmodulin in a calcium-dependent manner. Expressed in roots, hypocotyls, cotyledons, shoot apices, stems, inflorescence apices, leaves and flowers.

It is found in the cytoplasm. It localises to the nucleus. Elongator complex-associated factor that is not a structural subunit but rather transiently contacts the complex. Regulates both meristem activity and organ growth; acts as a positive regulator of adaxial leaf patterning by modulating both cell division and differentiation. Required for an early step in synthesis of 5-carbamoylmethyl (ncm5) groups present on uridines (ncm5U) at the wobble position in tRNA. The polypeptide is Protein KTI12 homolog (Arabidopsis thaliana (Mouse-ear cress)).